Consider the following 682-residue polypeptide: MAARSLGSGVGRLLRGLQGRSGQSGWSLSVSRSTATRLPGCVPAAAQPGSYPALSAQAAQEPAAFWGPLARDTLVWDTPYHTVWDCDFRTGKIGWFLGGQLNVSVNCLDQHVQKSPETIALIWERDEPGTEVRITYRELLETTCRLANTLKRHGVHRGDRVAIYMPVSPLAVAAMLACARIGAIHTVVFAGFSAESLAGRINDAKCKAVITFNQGLRGGRVVELKKIVDEAVKSCPTVQHVLVAHRTDTKVPMGSLDIPLEQEMAKEAPVCTPESMSSEDMLFMLYTSGSTGTPKGLVHTQAGYLLYAAMTHKLVFDYQPGDVFGCVADIGWITGHSYVVYGPLCNGATTVLFESTPVYPDAGRYWETVQRLKINQFYGAPTAVRLLLKYGDAWVKKYDRSSLRTLGSVGEPINHEAWEWLHKVVGDGRCTLVDTWWQTETGGICIAPRPSEDGAEILPGMAMRPFFGIVPVLMDEKGNVLEGGDVSGALCISQAWPGMARTIYGDHQRFVDAYFRAYPGYYFTGDGAHRTEGGYYQITGRMDDVINISGHRLGTAEIEDAMADHPAVPETAVIGYPHDIKGEAAFAFIVLKDNISDENMVVNELKLSVATKIAKYAVPDQILVVKRLPKTRSGKVMRRLLRKIITSRGQDLGDTTTLEDPSVITEILSAFQKYEEQRAATN.

A mitochondrion-targeting transit peptide spans 1 to 38 (MAARSLGSGVGRLLRGLQGRSGQSGWSLSVSRSTATRL). Residues 217–220 (RGGR) and Thr334 each bind CoA. The residue at position 389 (Lys389) is an N6-acetyllysine. ATP contacts are provided by residues 410–412 (GEP), 434–439 (DTWWQT), Asp526, and Arg541. CoA is bound at residue Ser549. Residue Arg552 participates in ATP binding. An N6-acetyllysine modification is found at Lys635.

Belongs to the ATP-dependent AMP-binding enzyme family. Interacts with SIRT3. Reversibly acetylated at Lys-635. The acetyl-CoA synthase activity is inhibited by acetylation and activated by deacetylation mediated by the deacetylase SIRT3. As to expression, highly expressed in heart, testis, kidney, skeletal muscle, lung and spleen. Detected at low levels in brain.

The protein resides in the mitochondrion matrix. It catalyses the reaction acetate + ATP + CoA = acetyl-CoA + AMP + diphosphate. It carries out the reaction propanoate + ATP + CoA = propanoyl-CoA + AMP + diphosphate. Its activity is regulated as follows. Inhibited by acetylation at Lys-635 and activated by deacetylation mediated by the deacetylase SIRT3. Its function is as follows. Catalyzes the synthesis of acetyl-CoA from short-chain fatty acids. Acetate is the preferred substrate. Can also utilize propionate with a much lower affinity. Provides acetyl-CoA that is utilized mainly for oxidation under ketogenic conditions. Involved in thermogenesis under ketogenic conditions, using acetate as a vital fuel when carbohydrate availability is insufficient. This is Acetyl-coenzyme A synthetase 2-like, mitochondrial (Acss1) from Mus musculus (Mouse).